A 486-amino-acid polypeptide reads, in one-letter code: Cardiolipin synthase A (486 aa).

2 helical membrane-spanning segments follow: residues Thr3 to Val23 and Met38 to Val58. 2 consecutive PLD phosphodiesterase domains span residues Met219 to Arg246 and Glu399 to Ser426. Residues His224, Lys226, Asp231, His404, Lys406, and Asp411 contribute to the active site.

It belongs to the phospholipase D family. Cardiolipin synthase subfamily. ClsA sub-subfamily.

The protein resides in the cell inner membrane. The enzyme catalyses 2 a 1,2-diacyl-sn-glycero-3-phospho-(1'-sn-glycerol) = a cardiolipin + glycerol. In terms of biological role, catalyzes the reversible phosphatidyl group transfer from one phosphatidylglycerol molecule to another to form cardiolipin (CL) (diphosphatidylglycerol) and glycerol. The chain is Cardiolipin synthase A from Shigella dysenteriae serotype 1 (strain Sd197).